A 78-amino-acid polypeptide reads, in one-letter code: UPF0349 protein Sca_0544 (78 aa).

The protein belongs to the UPF0349 family.

This chain is UPF0349 protein Sca_0544, found in Staphylococcus carnosus (strain TM300).